The following is a 562-amino-acid chain: Oligo-1,6-glucosidase (562 aa).

Positions 21, 23, 25, and 29 each coordinate Ca(2+). The Nucleophile role is filled by aspartate 199. The active-site Proton donor is glutamate 256.

Belongs to the glycosyl hydrolase 13 family.

Its subcellular location is the cytoplasm. It carries out the reaction Hydrolysis of (1-&gt;6)-alpha-D-glucosidic linkages in some oligosaccharides produced from starch and glycogen by alpha-amylase, and in isomaltose.. In Parageobacillus thermoglucosidasius (Geobacillus thermoglucosidasius), this protein is Oligo-1,6-glucosidase (malL).